A 198-amino-acid polypeptide reads, in one-letter code: Basic helix-loop-helix transcription factor amos (198 aa).

A disordered region spans residues 76–131 (EQQQHHLQANPLGKNQGRSPRYWNKQQRSKPYDKLSTSMSSSTSSASSSSSSSAGF). Positions 111–129 (STSMSSSTSSASSSSSSSA) are enriched in low complexity. One can recognise a bHLH domain in the interval 138-190 (KRRLAANARERRRMNSLNDAFDKLRDVVPSLGHDRRLSKYETLQMAQAYIGDL).

As to quaternary structure, efficient DNA binding requires dimerization with another bHLH protein. Interacts with Daughterless (da). During embryonic development, expression is seen in a small cluster of ectodermal cells during stage 10 which becomes restricted to 1 cell by stage 11. Expression is lost from this cell in the thorax and then the abdomen. Later expression is restricted to sensory organ precursors. Very transient expression was detected in distal leg disks at approximately 0-4 hours after puparium formation (APF), correlating with the anlage of the innervated tarsal claw.

Its subcellular location is the nucleus. In terms of biological role, transcription factor involved in early neurogenesis; sensillum basiconica formation and maybe sensillum trichodea development. Promotes multiple dendritic (MD) neuron formation. Required for olfactory sensilla; regulated by lozenge (lz). The polypeptide is Basic helix-loop-helix transcription factor amos (amos) (Drosophila melanogaster (Fruit fly)).